Reading from the N-terminus, the 147-residue chain is SsrA-binding protein (147 aa).

The protein belongs to the SmpB family.

It is found in the cytoplasm. Functionally, required for rescue of stalled ribosomes mediated by trans-translation. Binds to transfer-messenger RNA (tmRNA), required for stable association of tmRNA with ribosomes. tmRNA and SmpB together mimic tRNA shape, replacing the anticodon stem-loop with SmpB. tmRNA is encoded by the ssrA gene; the 2 termini fold to resemble tRNA(Ala) and it encodes a 'tag peptide', a short internal open reading frame. During trans-translation Ala-aminoacylated tmRNA acts like a tRNA, entering the A-site of stalled ribosomes, displacing the stalled mRNA. The ribosome then switches to translate the ORF on the tmRNA; the nascent peptide is terminated with the 'tag peptide' encoded by the tmRNA and targeted for degradation. The ribosome is freed to recommence translation, which seems to be the essential function of trans-translation. The protein is SsrA-binding protein of Mycoplasma pneumoniae (strain ATCC 29342 / M129 / Subtype 1) (Mycoplasmoides pneumoniae).